The primary structure comprises 246 residues: Pyridoxine 5'-phosphate synthase (246 aa).

Residues N8 and R19 each coordinate 3-amino-2-oxopropyl phosphate. The active-site Proton acceptor is H44. 1-deoxy-D-xylulose 5-phosphate-binding residues include R46 and H51. E76 serves as the catalytic Proton acceptor. T106 contributes to the 1-deoxy-D-xylulose 5-phosphate binding site. Catalysis depends on H198, which acts as the Proton donor. 3-amino-2-oxopropyl phosphate is bound by residues D199 and 221 to 222 (GH).

Belongs to the PNP synthase family. As to quaternary structure, homooctamer; tetramer of dimers.

The protein resides in the cytoplasm. The catalysed reaction is 3-amino-2-oxopropyl phosphate + 1-deoxy-D-xylulose 5-phosphate = pyridoxine 5'-phosphate + phosphate + 2 H2O + H(+). The protein operates within cofactor biosynthesis; pyridoxine 5'-phosphate biosynthesis; pyridoxine 5'-phosphate from D-erythrose 4-phosphate: step 5/5. Catalyzes the complicated ring closure reaction between the two acyclic compounds 1-deoxy-D-xylulose-5-phosphate (DXP) and 3-amino-2-oxopropyl phosphate (1-amino-acetone-3-phosphate or AAP) to form pyridoxine 5'-phosphate (PNP) and inorganic phosphate. The chain is Pyridoxine 5'-phosphate synthase from Brucella suis (strain ATCC 23445 / NCTC 10510).